Reading from the N-terminus, the 169-residue chain is Cell division inhibitor SulA (169 aa).

The interval 106–112 (ALRTGNY) is ftsZ binding. The tract at residues 162–169 (KIHSNLYH) is lon protease binding.

Belongs to the SulA family. Interacts with FtsZ. Post-translationally, is rapidly cleaved and degraded by the Lon protease once DNA damage is repaired.

Its function is as follows. Component of the SOS system and an inhibitor of cell division. Accumulation of SulA causes rapid cessation of cell division and the appearance of long, non-septate filaments. In the presence of GTP, binds a polymerization-competent form of FtsZ in a 1:1 ratio, thus inhibiting FtsZ polymerization and therefore preventing it from participating in the assembly of the Z ring. This mechanism prevents the premature segregation of damaged DNA to daughter cells during cell division. The protein is Cell division inhibitor SulA of Salmonella dublin (strain CT_02021853).